We begin with the raw amino-acid sequence, 1017 residues long: MSKPMDVEQEPKIDDALYSRQLYALSHETMKKITSTSVLVVGLQGLGIEIVKDLSLAGVKSVTLYDKELVEIKDLSSQFYFSPEQVGKVGRADACFQKVVDLNNYVRIDVHNGELSDEFLKKFNVVVLANQPLALQLKVNEFCHANKIHFISVETRGVFGQLFNDFGEQFTITDTNGENPNAYMISSISQDKEGIVTVVEEQKLQLLDGDLVTFKEVNGMSALNDLPPQKIKTISPLTFSIGDTTNLPPYTSGGYVTEVKQPKVVDFKPLKNILESGENIFITDDFKFTQPTNLLAGFQAIHKFAEKNKHMPRPHNKEDANAVIEIAKGLLKKPDDELDEKMITQLSFGAQGDIVPMQAILGGITAQEVLKACSGKFTPIHQLAFFDSVECLPEDLETLPEEEFQPIGSRYDGQIITFGKTLQNKIENLNYFLVGAGAIGCEMLKNFAMMGLGAGPKGLVHVTDMDTIEKSNLNRQFLFRSSDIQQLKSQTAANAVRVMNPDLNVKAYSLRVGPDTESHYNEEFFNSLDGVCNALDNVEARLYMDSQCVYYGKPLLESGTLGTKGNTQVVVPHLTESYSSSRDPPEKGIPVCTLHNFPNAIEHTIQWARDTFEGLFKNNADNVNSYLTNPAYVQSLKTQNPFVRLETLASIKASLMDRPLDFNQCIAWARLKFEEYFNNNIEQLLYNFPKDMVTTTGTPFWSGPKRAPTPLKFDVENPLHLEFIVAAANLRAFNYGIKAETNIEVIQKQAANVIVPDFTPKKVKIQTSENEPAPSSNTQQAGGDAEDDQCDTILSQLPQPSEMAGYKINSIQFEKDDDTNHHIDFITATSNLRATNYAISPADKHKTKGIAGKIIPALVTTTAVVAGFVCIELIKVIQNKALEKYKSTFMNLGIPFFGFVEPIAAPKNKIREGWTWTLWDRFDVDGDITLKEFLDLFEKKHGLDISMLSCKVTLLYALFTDKKTKEERLKMKISQLYETLSKKPLPKDKKYLLLEICCNDTETGDDVDVPSVRYKYN.

Repeat copies occupy residues 26–163 (SHET…GQLF) and 419–571 (GKTL…QVVV). The interval 26–571 (SHETMKKITS…GTKGNTQVVV (546 aa)) is 2 approximate repeats. ATP is bound by residues Ala-438, Asp-464, Arg-475, Lys-488, and 536-537 (DN). Cys-592 (glycyl thioester intermediate) is an active-site residue. A compositionally biased stretch (polar residues) spans 765 to 781 (IQTSENEPAPSSNTQQA). A disordered region spans residues 765–788 (IQTSENEPAPSSNTQQAGGDAEDD).

The protein belongs to the ubiquitin-activating E1 family. As to quaternary structure, monomer.

It carries out the reaction ATP + ubiquitin + [E1 ubiquitin-activating enzyme]-L-cysteine = AMP + diphosphate + S-ubiquitinyl-[E1 ubiquitin-activating enzyme]-L-cysteine.. The protein operates within protein modification; protein ubiquitination. Catalyzes the first step in ubiquitin conjugation to mark cellular proteins for degradation through the ubiquitin-proteasome system. Activates ubiquitin by first adenylating its C-terminal glycine residue with ATP, and thereafter linking this residue to the side chain of a cysteine residue in E1, yielding a ubiquitin-E1 thioester and free AMP. The polypeptide is Ubiquitin-like modifier-activating enzyme 1 (uba1) (Dictyostelium discoideum (Social amoeba)).